Consider the following 225-residue polypeptide: Sugar fermentation stimulation protein homolog (225 aa).

The protein belongs to the SfsA family.

This chain is Sugar fermentation stimulation protein homolog, found in Sulfolobus acidocaldarius (strain ATCC 33909 / DSM 639 / JCM 8929 / NBRC 15157 / NCIMB 11770).